Consider the following 429-residue polypeptide: Divergent protein kinase domain 2A (429 aa).

The first 34 residues, 1-34 (MLRLASLKFGRLFRYAKVLFAASLLVVMLLNTHS), serve as a signal peptide directing secretion.

Belongs to the DIPK family.

The protein localises to the cytoplasmic vesicle. The protein resides in the COPI-coated vesicle. It localises to the golgi apparatus. Its subcellular location is the secreted. Functionally, may play a role in cardiomyocyte proliferation through paracrine signaling and activation of the PPI3K-AKT-CDK7 signaling cascade. The chain is Divergent protein kinase domain 2A (dipk2a) from Xenopus tropicalis (Western clawed frog).